A 321-amino-acid polypeptide reads, in one-letter code: Endoglucanase 1 (321 aa).

A signal peptide spans 1 to 27 (MSRKLRTLMAALCALPLAFAAAPPAHA). The active site involves Asp110. A disulfide bridge connects residues Cys112 and Cys156. Catalysis depends on Asp149, which acts as the Proton donor. The Nucleophile role is filled by Asp295.

It belongs to the glycosyl hydrolase 6 (cellulase B) family.

The catalysed reaction is Endohydrolysis of (1-&gt;4)-beta-D-glucosidic linkages in cellulose, lichenin and cereal beta-D-glucans.. Its function is as follows. Implicated in the mechanism of induction exerted by cellobiose. This Streptomyces halstedii protein is Endoglucanase 1 (celA1).